The sequence spans 378 residues: Erythronate-4-phosphate dehydrogenase (378 aa).

2 residues coordinate substrate: S45 and T66. D146 and T175 together coordinate NAD(+). Residue R208 is part of the active site. An NAD(+)-binding site is contributed by D232. E237 is a catalytic residue. H254 acts as the Proton donor in catalysis. G257 contacts NAD(+). Residue Y258 coordinates substrate.

The protein belongs to the D-isomer specific 2-hydroxyacid dehydrogenase family. PdxB subfamily. Homodimer.

The protein localises to the cytoplasm. The enzyme catalyses 4-phospho-D-erythronate + NAD(+) = (R)-3-hydroxy-2-oxo-4-phosphooxybutanoate + NADH + H(+). The protein operates within cofactor biosynthesis; pyridoxine 5'-phosphate biosynthesis; pyridoxine 5'-phosphate from D-erythrose 4-phosphate: step 2/5. In terms of biological role, catalyzes the oxidation of erythronate-4-phosphate to 3-hydroxy-2-oxo-4-phosphonooxybutanoate. This is Erythronate-4-phosphate dehydrogenase from Salmonella dublin (strain CT_02021853).